A 215-amino-acid chain; its full sequence is Adenylate kinase (215 aa).

Residue 10–15 (GAGKGT) participates in ATP binding. The interval 30–59 (STGDMLRAAIKAGTPLGLEAKKIIDEGGLV) is NMP. Residues T31, R36, 57 to 59 (GLV), 85 to 88 (GFPR), and Q92 contribute to the AMP site. Positions 122 to 159 (GRRVHLASGRTYHVTYNPPKTEGKDDVTGEDLIQRDDD) are LID. ATP-binding positions include R123 and 132–133 (TY). AMP contacts are provided by R156 and R167. Q200 contacts ATP.

Belongs to the adenylate kinase family. As to quaternary structure, monomer.

Its subcellular location is the cytoplasm. The enzyme catalyses AMP + ATP = 2 ADP. It participates in purine metabolism; AMP biosynthesis via salvage pathway; AMP from ADP: step 1/1. Functionally, catalyzes the reversible transfer of the terminal phosphate group between ATP and AMP. Plays an important role in cellular energy homeostasis and in adenine nucleotide metabolism. This Neisseria gonorrhoeae (strain ATCC 700825 / FA 1090) protein is Adenylate kinase.